The following is a 331-amino-acid chain: MGQTRVAATTAAQSPAAELSPETNGQTEEPLQLLGEDSWEEFSIAVPWGTVEAKWWGSKERQPIIALHGWQDNCGSFDRLCPLLPADTSILAIDLPGHGKSSHYPMGMQYFIFWDGICLIRRIVRKYNWKNVTLLGHSLGGALTFMYAASFPTEVEKLINIDIAGPTVRGTQRMAEGTGRALDKFLDYETLPESKQPCYSYDEMIKLVLDAYDGSVDEPSVRVLMNRGMRHNPSKNGYLFARDLRLKVSLLGMFTAEQTLAYARQIRCRVLNIRGIPGMKFETPQVYADVIATLRENAAKVVYVEVPGTHHLHLVTPDRVAPHIIRFLKEA.

The disordered stretch occupies residues 1-28; the sequence is MGQTRVAATTAAQSPAAELSPETNGQTE. Low complexity predominate over residues 7–17; the sequence is AATTAAQSPAA. Residues 63 to 163 enclose the AB hydrolase-1 domain; sequence PIIALHGWQD…EVEKLINIDI (101 aa). Ser-138 is a catalytic residue.

This sequence belongs to the AB hydrolase superfamily. In terms of tissue distribution, ubiquitously expressed before embryonic stage 11. At stage 11, expression is concentrated in the foregut and posterior midgut. By stage 15, in gastric caeca, pharynx, posterior spiracles and anterior edge of midgut. At the end of embryogenesis, expression is confined to gastric caeca. During third instar larvae, expressed at low levels in gastric caeca, midgut and hindgut and high level in fat body.

Its function is as follows. May have a role in detoxification and digestion during embryogenesis and larval development. This is Probable serine hydrolase (kraken) from Drosophila melanogaster (Fruit fly).